Consider the following 169-residue polypeptide: MVNRILDLLIQYKAVEFGDFTLASGAQSKYYIDVKTAIMQPELLSEIAAEVAKKYDFECIAGVAVGGVPLAVAVSLAANKPCAVIRAAAKDHGKSQMIIGNVKGQRVLLIEDVTTSGGSSKYGVEELRKAGALIDSVVTVVDREGGAEELLAAEGITLHPLVKASELLA.

5-phospho-alpha-D-ribose 1-diphosphate is bound by residues arginine 86, lysine 90, histidine 92, and 111-119 (EDVTTSGGS). Residues threonine 115 and arginine 143 each contribute to the orotate site.

Belongs to the purine/pyrimidine phosphoribosyltransferase family. PyrE subfamily. Homodimer. Mg(2+) serves as cofactor.

The enzyme catalyses orotidine 5'-phosphate + diphosphate = orotate + 5-phospho-alpha-D-ribose 1-diphosphate. The protein operates within pyrimidine metabolism; UMP biosynthesis via de novo pathway; UMP from orotate: step 1/2. Functionally, catalyzes the transfer of a ribosyl phosphate group from 5-phosphoribose 1-diphosphate to orotate, leading to the formation of orotidine monophosphate (OMP). The protein is Orotate phosphoribosyltransferase of Methanocorpusculum labreanum (strain ATCC 43576 / DSM 4855 / Z).